Here is a 576-residue protein sequence, read N- to C-terminus: MELENIVANTVLLKAREGGGGNRKGKSKKWRQMLQFPHISQCEELRLSLERDYHSLCERQPIGRLLFREFCATRPELTRCTAFLDGVAEYEVTPDEKRKACGCRLMQNFLSHTGPDLIPEVPRQLVSNCAQRLEQGPCKDLFQELTRLTHEYLSMAPFADYLDSIYFNRFLQWKWLERQPVTKNTFRQYRVLGKGGFGEVCACQVRATGKMYACKKLEKKRIKKRKGEAMALNEKQILEKVNSRFVVSLAYAYETKDALCLVLTLMNGGDLKFHIYHMGQAGFPEARAVFYAAEICCGLEDLHRERIVYRDLKPENILLDDHGHIRISDLGLTVHVPEGQTIKGRVGTVGYMAPEVVKNERYTFSPDWWALGCLLYEMIAGQSPFQQRKKKIKREEVERLVKEVAEEYTDRFSPQARSLCSQLPNKDPAERLGCRGGGAREVKEHPLFKKLNFKRLGAGMLEPPFKPDPQAIYCKDVLDIEQFSTVKGVDLEPTDQDFYQKFATGSVSIPWQNEMVETECFQELNVFGLDGSVPPDLDWKGQPTAPPKKGLLQRLFSRQDCCGNCSDSEEELPTRL.

Residues 1–185 are N-terminal; it reads MELENIVANT…LERQPVTKNT (185 aa). The 119-residue stretch at 53-171 folds into the RGS domain; that stretch reads YHSLCERQPI…LDSIYFNRFL (119 aa). Residues 186–448 form the Protein kinase domain; that stretch reads FRQYRVLGKG…AREVKEHPLF (263 aa). ATP-binding positions include 192 to 200, Lys-215, and 264 to 270; these read LGKGGFGEV and TLMNGGD. Asp-311 functions as the Proton acceptor in the catalytic mechanism. 315 to 318 contacts ATP; it reads ENIL. The 66-residue stretch at 449–514 folds into the AGC-kinase C-terminal domain; it reads KKLNFKRLGA…GSVSIPWQNE (66 aa). Ser-484 is subject to Phosphoserine; by autocatalysis. Residue Thr-485 is modified to Phosphothreonine; by autocatalysis. 3 S-palmitoyl cysteine lipidation sites follow: Cys-561, Cys-562, and Cys-565. A phosphoserine mark is found at Ser-566 and Ser-568.

Belongs to the protein kinase superfamily. AGC Ser/Thr protein kinase family. GPRK subfamily. Interacts with GIT1. As to expression, widely expressed. Detectable in all brain areas examined.

It localises to the membrane. It carries out the reaction [G-protein-coupled receptor] + ATP = [G-protein-coupled receptor]-phosphate + ADP + H(+). Functionally, specifically phosphorylates the activated forms of G protein-coupled receptors. Such receptor phosphorylation initiates beta-arrestin-mediated receptor desensitization, internalization, and signaling events leading to their desensitization. Seems to be involved in the desensitization of D2-like dopamine receptors in striatum and chemokine receptor CXCR4 which is critical for CXCL12-induced cell chemotaxis. Phosphorylates rhodopsin (RHO) (in vitro) and a non G-protein-coupled receptor: LRP6 during Wnt signaling (in vitro). This chain is G protein-coupled receptor kinase 6 (Grk6), found in Rattus norvegicus (Rat).